The sequence spans 142 residues: Snaclec 2 (142 aa).

A signal peptide spans 1–23; that stretch reads MGRFIFVSFSLLVVFLSLSGTGA. A disulfide bridge connects residues C25 and C36. Residues 32–139 enclose the C-type lectin domain; that stretch reads YEGHCYRVFQ…CSETHNVICK (108 aa). A glycan (N-linked (GlcNAc...) asparagine) is linked at N43. Intrachain disulfides connect C53/C138 and C115/C130.

Belongs to the snaclec family. In terms of assembly, heterodimer; disulfide-linked. In terms of tissue distribution, expressed by the venom gland.

The protein resides in the secreted. Interferes with one step of hemostasis (modulation of platelet aggregation, or coagulation cascade, for example). This chain is Snaclec 2, found in Sistrurus catenatus edwardsii (Desert massasauga).